Reading from the N-terminus, the 291-residue chain is B-lymphocyte antigen CD20 (291 aa).

At 1-44 (MSGPFPAEPTKGPLAMQPAPKVNLKRTSSLVGPTQSFFMRESKA) the chain is on the cytoplasmic side. At Ser29 the chain carries Phosphoserine. The helical transmembrane segment at 45–65 (LGAVQIMNGLFHITLGGLLMI) threads the bilayer. Over 66-68 (PTG) the chain is Extracellular. Residues 69–89 (VFAPICLSVWYPLWGGIMYII) traverse the membrane as a helical segment. Over 90-111 (SGSLLAAAAEKTSRKSLVKAKV) the chain is Cytoplasmic. The helical transmembrane segment at 112 to 132 (IMSSLSLFAAISGIILSIMDI) threads the bilayer. Residues 133–182 (LNMTLSHFLKMRRLELIQTSKPYVDIYDCEPSNSSEKNSPSTQYCNSIQS) lie on the Extracellular side of the membrane. A helical transmembrane segment spans residues 183–203 (VFLGILSAMLISAFFQKLVTA). Topologically, residues 204–291 (GIVENEWKRM…SLPVENEIAP (88 aa)) are cytoplasmic. The S-palmitoyl cysteine moiety is linked to residue Cys214. A Phosphoserine modification is found at Ser219. Thr233 bears the Phosphothreonine mark. Acidic residues predominate over residues 261-270 (VQEEEEEEAE). Positions 261 to 291 (VQEEEEEEAEINFPAPPQEQESLPVENEIAP) are disordered.

The protein belongs to the MS4A family. As to quaternary structure, forms homotetramers. Interacts with the heavy and light chains of cell surface IgM, the antigen-binding components of the BCR. Phosphorylated.

It is found in the cell membrane. In terms of biological role, B-lymphocyte-specific membrane protein that plays a role in the regulation of cellular calcium influx necessary for the development, differentiation, and activation of B-lymphocytes. Functions as a store-operated calcium (SOC) channel component promoting calcium influx after activation by the B-cell receptor/BCR. The sequence is that of B-lymphocyte antigen CD20 (Ms4a1) from Mus musculus (Mouse).